Here is a 111-residue protein sequence, read N- to C-terminus: WAP four-disulfide core domain protein 12 (111 aa).

The N-terminal stretch at 1–23 is a signal peptide; it reads MGSSSFLVLMVSLALVTLVAAEG. In terms of domain architecture, WAP spans 27 to 74; that stretch reads GIEKAGVCPADNIRCFKSDPPQCHTDQDCLGERKCCYLHCGFKCVIPV. Cystine bridges form between Cys-34-Cys-62, Cys-41-Cys-66, Cys-49-Cys-61, and Cys-55-Cys-70. Residues 80–111 form a disordered region; it reads GGNKDEDVSGPCPEPGWEAKSPGSSSTGCPQK. The segment covering 101-111 has biased composition (polar residues); the sequence is PGSSSTGCPQK.

The protein resides in the secreted. Functionally, antibacterial protein. Putative acid-stable proteinase inhibitor. The protein is WAP four-disulfide core domain protein 12 (WFDC12) of Macaca mulatta (Rhesus macaque).